The primary structure comprises 622 residues: Polypeptide N-acetylgalactosaminyltransferase 6 (622 aa).

At 1 to 8 (MRLLRRRH) the chain is on the cytoplasmic side. Residues 9-28 (MPLRLAMVGCAFVLFLFLLH) traverse the membrane as a helical; Signal-anchor for type II membrane protein segment. Residues 29–622 (RDVSSREEAT…SDPHQLWLFV (594 aa)) are Lumenal-facing. A glycan (N-linked (GlcNAc...) asparagine) is linked at asparagine 86. Cystine bridges form between cysteine 165–cysteine 402 and cysteine 393–cysteine 474. The tract at residues 176–285 (LATTSVIIVF…HGWLEPLLAR (110 aa)) is catalytic subdomain A. Mn(2+)-binding residues include aspartate 269, histidine 271, and histidine 407. The catalytic subdomain B stretch occupies residues 348–410 (PIKSPTFAGG…PCSVVGHVFR (63 aa)). Asparagine 476 carries N-linked (GlcNAc...) asparagine glycosylation. The region spanning 506-622 (TNQCLDVGEN…SDPHQLWLFV (117 aa)) is the Ricin B-type lectin domain. The cysteines at positions 509 and 527 are disulfide-linked. Residues aspartate 511, glutamate 514, histidine 528, and asparagine 533 each coordinate UDP-N-acetyl-alpha-D-galactosamine. Cystine bridges form between cysteine 553-cysteine 566 and cysteine 597-cysteine 610.

It belongs to the glycosyltransferase 2 family. GalNAc-T subfamily. The cofactor is Mn(2+). As to expression, expressed in placenta and trachea. Weakly expressed in brain and pancreas. Expressed in fibroblast. Weakly or not expressed in lung, liver, muscle, kidney, spleen, thymus, prostate, testis, ovary, intestine, colon, leukocyte, stomach, thyroid, spinal cord, lymph node, trachea, adrenal gland and bone marrow.

Its subcellular location is the golgi apparatus membrane. The enzyme catalyses L-seryl-[protein] + UDP-N-acetyl-alpha-D-galactosamine = a 3-O-[N-acetyl-alpha-D-galactosaminyl]-L-seryl-[protein] + UDP + H(+). It catalyses the reaction L-threonyl-[protein] + UDP-N-acetyl-alpha-D-galactosamine = a 3-O-[N-acetyl-alpha-D-galactosaminyl]-L-threonyl-[protein] + UDP + H(+). Its pathway is protein modification; protein glycosylation. In terms of biological role, catalyzes the initial reaction in O-linked oligosaccharide biosynthesis, the transfer of an N-acetyl-D-galactosamine residue to a serine or threonine residue on the protein receptor. May participate in synthesis of oncofetal fibronectin. Has activity toward MUC1A, MUC2, EA2 and fibronectin peptides. Glycosylates FGF23. This is Polypeptide N-acetylgalactosaminyltransferase 6 (GALNT6) from Homo sapiens (Human).